The following is a 127-amino-acid chain: Calcitonin gene-related peptide 2 (127 aa).

The N-terminal stretch at 1–25 (MGFRKFSPFLALSILVLYQAGSLQA) is a signal peptide. A propeptide spanning residues 26-79 (APFRSALESSPDPATLSKEDARLLLAALVQDYVQMKASELKQEQETQGSSSAAQ) is cleaved from the precursor. Cys-83 and Cys-88 are joined by a disulfide. At Phe-118 the chain carries Phenylalanine amide. The propeptide occupies 124–127 (DLQA).

This sequence belongs to the calcitonin family. Expressed in spinal cord, pituitary and thalamus.

The protein resides in the secreted. CALCB/CGRP2 is a peptide hormone that induces vasodilation mediated by the CALCRL-RAMP1 receptor complex. Dilates a variety of vessels including the coronary, cerebral and systemic vasculature. Its abundance in the CNS also points toward a neurotransmitter or neuromodulator role. This is Calcitonin gene-related peptide 2 from Homo sapiens (Human).